The chain runs to 565 residues: Membrane protein insertase YidC (565 aa).

6 helical membrane passes run 6-26 (VLLI…WGKN), 348-368 (LMAL…SLLH), 370-390 (WGWA…PLSA), 437-457 (GGCF…WVLV), 479-499 (PYFI…KLTP), and 516-536 (PLIF…YWVI).

This sequence belongs to the OXA1/ALB3/YidC family. Type 1 subfamily. In terms of assembly, interacts with the Sec translocase complex via SecD. Specifically interacts with transmembrane segments of nascent integral membrane proteins during membrane integration.

Its subcellular location is the cell inner membrane. Functionally, required for the insertion and/or proper folding and/or complex formation of integral membrane proteins into the membrane. Involved in integration of membrane proteins that insert both dependently and independently of the Sec translocase complex, as well as at least some lipoproteins. Aids folding of multispanning membrane proteins. The sequence is that of Membrane protein insertase YidC from Xylella fastidiosa (strain M12).